We begin with the raw amino-acid sequence, 246 residues long: Phycocyanobilin:ferredoxin oxidoreductase (246 aa).

Belongs to the HY2 family.

It catalyses the reaction (2R,3Z)-phycocyanobilin + 4 oxidized [2Fe-2S]-[ferredoxin] = biliverdin IXalpha + 4 reduced [2Fe-2S]-[ferredoxin] + 4 H(+). In terms of biological role, catalyzes the four-electron reduction of biliverdin IX-alpha (2-electron reduction at both the A and D rings); the reaction proceeds via an isolatable 2-electron intermediate, 181,182-dihydrobiliverdin. The sequence is that of Phycocyanobilin:ferredoxin oxidoreductase from Crocosphaera subtropica (strain ATCC 51142 / BH68) (Cyanothece sp. (strain ATCC 51142)).